Reading from the N-terminus, the 398-residue chain is uncharacterized protein (398 aa).

This is an uncharacterized protein from Ostreid herpesvirus 1 (isolate France) (OsHV-1).